The chain runs to 182 residues: Large ribosomal subunit protein uL5 (182 aa).

Belongs to the universal ribosomal protein uL5 family. In terms of assembly, part of the 50S ribosomal subunit; part of the 5S rRNA/L5/L18/L25 subcomplex. Contacts the 5S rRNA and the P site tRNA. Forms a bridge to the 30S subunit in the 70S ribosome.

In terms of biological role, this is one of the proteins that bind and probably mediate the attachment of the 5S RNA into the large ribosomal subunit, where it forms part of the central protuberance. In the 70S ribosome it contacts protein S13 of the 30S subunit (bridge B1b), connecting the 2 subunits; this bridge is implicated in subunit movement. Contacts the P site tRNA; the 5S rRNA and some of its associated proteins might help stabilize positioning of ribosome-bound tRNAs. The sequence is that of Large ribosomal subunit protein uL5 from Coxiella burnetii (strain CbuK_Q154) (Coxiella burnetii (strain Q154)).